The primary structure comprises 441 residues: Ribosomal protein uS12 methylthiotransferase RimO (441 aa).

In terms of domain architecture, MTTase N-terminal spans 6–116; that stretch reads QKVGIVSLGC…VVAAVHEAAP (111 aa). Residues C15, C51, C80, C147, C151, and C154 each coordinate [4Fe-4S] cluster. One can recognise a Radical SAM core domain in the interval 133–370; sequence LTPRHYAYLK…MAAQQEISER (238 aa). The 67-residue stretch at 373–439 folds into the TRAM domain; that stretch reads AQKVGTVIEA…EYDLWGSLAG (67 aa).

It belongs to the methylthiotransferase family. RimO subfamily. Requires [4Fe-4S] cluster as cofactor.

The protein localises to the cytoplasm. The catalysed reaction is L-aspartate(89)-[ribosomal protein uS12]-hydrogen + (sulfur carrier)-SH + AH2 + 2 S-adenosyl-L-methionine = 3-methylsulfanyl-L-aspartate(89)-[ribosomal protein uS12]-hydrogen + (sulfur carrier)-H + 5'-deoxyadenosine + L-methionine + A + S-adenosyl-L-homocysteine + 2 H(+). In terms of biological role, catalyzes the methylthiolation of an aspartic acid residue of ribosomal protein uS12. The chain is Ribosomal protein uS12 methylthiotransferase RimO from Rhodospirillum rubrum (strain ATCC 11170 / ATH 1.1.1 / DSM 467 / LMG 4362 / NCIMB 8255 / S1).